A 245-amino-acid polypeptide reads, in one-letter code: Orotidine 5'-phosphate decarboxylase (245 aa).

Substrate is bound by residues Asp22, Lys44, 71–80, Thr131, Arg192, Gln201, Gly221, and Arg222; that span reads DLKFHDIPNT. The active-site Proton donor is the Lys73.

This sequence belongs to the OMP decarboxylase family. Type 1 subfamily. As to quaternary structure, homodimer.

It catalyses the reaction orotidine 5'-phosphate + H(+) = UMP + CO2. Its pathway is pyrimidine metabolism; UMP biosynthesis via de novo pathway; UMP from orotate: step 2/2. In terms of biological role, catalyzes the decarboxylation of orotidine 5'-monophosphate (OMP) to uridine 5'-monophosphate (UMP). The sequence is that of Orotidine 5'-phosphate decarboxylase from Salmonella typhimurium (strain LT2 / SGSC1412 / ATCC 700720).